A 254-amino-acid chain; its full sequence is UPF0246 protein lpp1320 (254 aa).

This sequence belongs to the UPF0246 family.

The protein is UPF0246 protein lpp1320 of Legionella pneumophila (strain Paris).